The chain runs to 254 residues: Anti-sigma-M factor RsmA (254 aa).

Over methionine 1–arginine 112 the chain is Cytoplasmic. A helical membrane pass occupies residues methionine 113–valine 133. The Extracellular portion of the chain corresponds to aspartate 134 to alanine 254.

Interacts with ECF RNA polymerase sigma factor SigM; this should inhibit the interaction of SigM with the RNA polymerase catalytic core. Post-translationally, probably cleaved within the membrane by Rip1 near the cytoplasmic membrane interface.

Its subcellular location is the cell membrane. An anti-sigma factor for extracytoplasmic function (ECF) sigma factor SigM. ECF sigma factors are held in an inactive form by an anti-sigma factor until released by regulated intramembrane proteolysis (RIP). RIP occurs when an extracytoplasmic signal triggers a concerted proteolytic cascade to transmit information and elicit cellular responses. The membrane-spanning regulatory substrate protein is first cut extracytoplasmically (site-1 protease, S1P), then within the membrane itself (site-2 protease, S2P, Rip1), while cytoplasmic proteases finish degrading the regulatory protein, liberating the sigma factor. This chain is Anti-sigma-M factor RsmA (rsmA), found in Mycobacterium tuberculosis (strain ATCC 35801 / TMC 107 / Erdman).